The primary structure comprises 126 residues: MQASSEPANVHFEGQNQSSEGQLSTSPPRRWRNCTLQRHGSRASADEFCEQYRSRSHGPQGRRSLEHDNQFFNSRTYYGNGGNTTDTEALQKSVGSQSADEFETLREQTVPNPIAEAWRKYFRKVH.

The disordered stretch occupies residues 1–101; sequence MQASSEPANV…KSVGSQSADE (101 aa). Polar residues-rich tracts occupy residues 14 to 27 and 86 to 99; these read GQNQSSEGQLSTSP and DTEALQKSVGSQSA.

This is an uncharacterized protein from Schizosaccharomyces pombe (strain 972 / ATCC 24843) (Fission yeast).